Here is a 248-residue protein sequence, read N- to C-terminus: MTEVLGRVHSVETMGTVDGPGIRFIVFMQGCLLRCQFCHNPDTWKIGTGTERSAQDVFDEAIKYKEFWDASGGGVTVSGGEPLLQVDFLIEFFTLCKAAGVHTTIDSCGGCFTRDPEFIEKLDRLMEVTDLILLDIKQINPEKHLKLTTKSNAPIIDFAHYLRDKEQPIWIRHVLIPTKTDDPEDLTKLHEFIQTLPNVKQVDVLPYHTMGVYKWKEMGIRYPLEGIEAPEEEVVALANKILETSSYK.

The region spanning 17 to 248 (VDGPGIRFIV…NKILETSSYK (232 aa)) is the Radical SAM core domain. 3 residues coordinate [4Fe-4S] cluster: cysteine 31, cysteine 35, and cysteine 38. S-adenosyl-L-methionine contacts are provided by residues 37 to 39 (FCH), glycine 80, 135 to 137 (DIK), and histidine 208.

Belongs to the organic radical-activating enzymes family. It depends on [4Fe-4S] cluster as a cofactor.

The protein resides in the cytoplasm. The catalysed reaction is glycyl-[formate C-acetyltransferase] + reduced [flavodoxin] + S-adenosyl-L-methionine = glycin-2-yl radical-[formate C-acetyltransferase] + semiquinone [flavodoxin] + 5'-deoxyadenosine + L-methionine + H(+). In terms of biological role, activation of pyruvate formate-lyase under anaerobic conditions by generation of an organic free radical, using S-adenosylmethionine and reduced flavodoxin as cosubstrates to produce 5'-deoxy-adenosine. The polypeptide is Pyruvate formate-lyase-activating enzyme (pflA) (Listeria innocua serovar 6a (strain ATCC BAA-680 / CLIP 11262)).